The primary structure comprises 154 residues: Protein X (154 aa).

The mitochondrial targeting sequence stretch occupies residues 68–117 (PCALRFTSARCMETTVNAHQILPKVLHKRTLGLPAMSTTDLEAYFKDCVF).

Belongs to the orthohepadnavirus protein X family. As to quaternary structure, may form homodimer. May interact with host CEBPA, CFLAR, CREB1, DDB1, E4F1, HBXIP, HSPD1/HSP60, NFKBIA, POLR2E and SMAD4. Interacts with host SMC5-SMC6 complex and induces its degradation. Interacts with host TRPC4AP; leading to prevent ubiquitination of TRPC4AP. Interacts with host PLSCR1; this interaction promotes ubiquitination and degradation of HBx and impairs HBx-mediated cell proliferation. A fraction may be phosphorylated in insect cells and HepG2 cells, a human hepatoblastoma cell line. Phosphorylated in vitro by host protein kinase C or mitogen-activated protein kinase. N-acetylated in insect cells.

The protein localises to the host cytoplasm. Its subcellular location is the host nucleus. It localises to the host mitochondrion. In terms of biological role, multifunctional protein that plays a role in silencing host antiviral defenses and promoting viral transcription. Does not seem to be essential for HBV infection. May be directly involved in development of cirrhosis and liver cancer (hepatocellular carcinoma). Most of cytosolic activities involve modulation of cytosolic calcium. The effect on apoptosis is controversial depending on the cell types in which the studies have been conducted. May induce apoptosis by localizing in mitochondria and causing loss of mitochondrial membrane potential. May also modulate apoptosis by binding host CFLAR, a key regulator of the death-inducing signaling complex (DISC). Promotes viral transcription by using the host E3 ubiquitin ligase DDB1 to target the SMC5-SMC6 complex to proteasomal degradation. This host complex would otherwise bind to viral episomal DNA, and prevents its transcription. Moderately stimulates transcription of many different viral and cellular transcription elements. Promoters and enhancers stimulated by HBx contain DNA binding sites for NF-kappa-B, AP-1, AP-2, c-EBP, ATF/CREB, or the calcium-activated factor NF-AT. The sequence is that of Protein X from Homo sapiens (Human).